The chain runs to 836 residues: Glutamate receptor ionotropic, kainate glr-3 (836 aa).

An N-terminal signal peptide occupies residues 1 to 19 (MFWIAKTLIAFLILLKTDC). The Extracellular segment spans residues 20–523 (YKIAIPANLI…WFKFMDPLST (504 aa)). Cys-76 and Cys-320 are disulfide-bonded. Asn-225, Asn-257, Asn-356, Asn-391, and Asn-419 each carry an N-linked (GlcNAc...) asparagine glycan. L-glutamate is bound by residues 478 to 480 (SLT) and Arg-485. Residues 524–544 (QVWIMTFASYFVVSVAIWIIA) form a helical membrane-spanning segment. Residues 545–600 (KISPYEQFERDEDNGQYKPVDNQFSLRNSFWFTVCSLMQQGSELCPRAASTRLLTG) lie on the Cytoplasmic side of the membrane. Residues 601-621 (IWWFFALILISSYTANLAAVL) traverse the membrane as a helical segment. At 622-780 (TTRRMETPIE…KRKDQDDGES (159 aa)) the chain is on the extracellular side. Position 651–652 (651–652 (ST)) interacts with L-glutamate. Asn-657 carries N-linked (GlcNAc...) asparagine glycosylation. Position 699 (Glu-699) interacts with L-glutamate. A helical transmembrane segment spans residues 781-801 (IGGIFIILVVGLVLTAVLVIF). Residues 802 to 836 (ELITTRKPSPAQSQVIRHVNVIPSFKLGFFRWNVN) lie on the Cytoplasmic side of the membrane.

It belongs to the glutamate-gated ion channel (TC 1.A.10.1) family. Expressed in the intestine and in the ASER neuron. Also expressed in the thermosensitive RIA interneuron.

The protein localises to the cell membrane. It localises to the postsynaptic cell membrane. With respect to regulation, activated by low temperature of 18 degrees Celsius in ASER neuron. Functionally, ionotropic glutamate receptor. Activation by glutamate requires additional verification. L-glutamate acts as an excitatory neurotransmitter at many synapses in the central nervous system. Binding of the excitatory neurotransmitter L-glutamate induces a conformation change, leading to the opening of the cation channel, and thereby converts the chemical signal to an electrical impulse. The receptor then desensitizes rapidly and enters a transient inactive state, characterized by the presence of bound agonist. Its function is as follows. Independent of its ionotropic glutamate receptor activity, acts as a thermoreceptor in the ASER neuron where it triggers a calcium response to activate cold avoidance behavior in response to temperatures below 19 degrees Celsius. Possibly functions as a metabotropic cold receptor and acts upstream of the G(o) G protein goa-1 in the ASER neuron. Also functions in cold sensing in the intestine. This is Glutamate receptor ionotropic, kainate glr-3 from Caenorhabditis elegans.